Reading from the N-terminus, the 469-residue chain is 3-isopropylmalate dehydratase large subunit (469 aa).

[4Fe-4S] cluster-binding residues include Cys-349, Cys-409, and Cys-412.

Belongs to the aconitase/IPM isomerase family. LeuC type 1 subfamily. In terms of assembly, heterodimer of LeuC and LeuD. Requires [4Fe-4S] cluster as cofactor.

The enzyme catalyses (2R,3S)-3-isopropylmalate = (2S)-2-isopropylmalate. It functions in the pathway amino-acid biosynthesis; L-leucine biosynthesis; L-leucine from 3-methyl-2-oxobutanoate: step 2/4. Its function is as follows. Catalyzes the isomerization between 2-isopropylmalate and 3-isopropylmalate, via the formation of 2-isopropylmaleate. The protein is 3-isopropylmalate dehydratase large subunit of Methylorubrum populi (strain ATCC BAA-705 / NCIMB 13946 / BJ001) (Methylobacterium populi).